Reading from the N-terminus, the 509-residue chain is uncharacterized protein (509 aa).

An N-terminal signal peptide occupies residues 1–32 (MMLPKRNIIHFLRKRAIFIVAAFIALLTVDYS).

Its subcellular location is the endoplasmic reticulum. This is an uncharacterized protein from Schizosaccharomyces pombe (strain 972 / ATCC 24843) (Fission yeast).